Here is a 181-residue protein sequence, read N- to C-terminus: uncharacterized protein (181 aa).

The tract at residues glutamine 162–alanine 181 is disordered.

This is an uncharacterized protein from Homo sapiens (Human).